The primary structure comprises 349 residues: Protein disulfide isomerase Creld2 (349 aa).

The N-terminal stretch at 1 to 22 is a signal peptide; the sequence is MHLLLAAGFGLLLLLLPPPAAS. The short motif at 28-31 is the CXXC element; it reads CQRC. Intrachain disulfides connect cysteine 28–cysteine 31, cysteine 137–cysteine 151, cysteine 145–cysteine 163, and cysteine 165–cysteine 174. Residues 133-175 enclose the EGF-like 1 domain; sequence DCKECQGGSERPCSGNGYCSGDGSRQGDGSCQCHAGYKGPLCI. Asparagine 187 is a glycosylation site (N-linked (GlcNAc...) asparagine). The stretch at 190-237 is one FU 1 repeat; sequence HSICLACDESCKTCSGPSNKDCVQCEVGWARVEDACVDVDECAAETPP. Asparagine 248 carries an N-linked (GlcNAc...) asparagine glycan. The stretch at 250 to 297 is one FU 2 repeat; sequence SYICEECDSTCVGCTGKGPANCKECIAGYTKQSGQCADIDECSLEEKA. The short motif at 260 to 263 is the CXXC element; sequence CVGC. 4 disulfides stabilise this stretch: cysteine 260-cysteine 263, cysteine 291-cysteine 305, cysteine 298-cysteine 314, and cysteine 316-cysteine 327. The EGF-like 2; calcium-binding domain occupies 287–328; that stretch reads DIDECSLEEKACKRRNENCYNVPGSFVCVCPDGFEETEDACV.

It belongs to the CRELD family. As to quaternary structure, interacts with Chrna4. Component of a complex containing at least Creld2, Manf, Matn3 and Pdia4. In terms of tissue distribution, broadly expressed in brain (at protein level).

It localises to the endoplasmic reticulum. The enzyme catalyses Catalyzes the rearrangement of -S-S- bonds in proteins.. Its function is as follows. Protein disulfide isomerase. Might play a role in the unfolded protein response. May regulate transport of alpha4-beta2 neuronal acetylcholine receptor. This chain is Protein disulfide isomerase Creld2 (Creld2), found in Rattus norvegicus (Rat).